We begin with the raw amino-acid sequence, 293 residues long: Acetyl-coenzyme A carboxylase carboxyl transferase subunit beta (293 aa).

The CoA carboxyltransferase N-terminal domain occupies 29 to 293; sequence LWSKCPECGL…GSKSLELTNA (265 aa). Residues Cys-33, Cys-36, Cys-52, and Cys-55 each contribute to the Zn(2+) site. The C4-type zinc finger occupies 33 to 55; sequence CPECGLVVYLKDLRLNASVCAGC.

The protein belongs to the AccD/PCCB family. In terms of assembly, acetyl-CoA carboxylase is a heterohexamer composed of biotin carboxyl carrier protein (AccB), biotin carboxylase (AccC) and two subunits each of ACCase subunit alpha (AccA) and ACCase subunit beta (AccD). The cofactor is Zn(2+).

The protein resides in the cytoplasm. The catalysed reaction is N(6)-carboxybiotinyl-L-lysyl-[protein] + acetyl-CoA = N(6)-biotinyl-L-lysyl-[protein] + malonyl-CoA. The protein operates within lipid metabolism; malonyl-CoA biosynthesis; malonyl-CoA from acetyl-CoA: step 1/1. Component of the acetyl coenzyme A carboxylase (ACC) complex. Biotin carboxylase (BC) catalyzes the carboxylation of biotin on its carrier protein (BCCP) and then the CO(2) group is transferred by the transcarboxylase to acetyl-CoA to form malonyl-CoA. This Synechococcus sp. (strain CC9902) protein is Acetyl-coenzyme A carboxylase carboxyl transferase subunit beta.